The sequence spans 715 residues: Putative membrane protein IgaA homolog (715 aa).

The next 5 helical transmembrane spans lie at 2–22 (STIVLILALLLTSLIAVGLLW), 214–234 (EACAICIALLLLFFALSGPTV), 235–255 (TLPWLVIVAVSLTCWACWYLF), 349–369 (NLTLIVGSLLVLVLLLIYVPL), and 663–683 (ATSLLLLVLIFCLVVNMVLLI).

This sequence belongs to the IgaA family.

The protein resides in the cell inner membrane. This is Putative membrane protein IgaA homolog from Yersinia pestis.